The primary structure comprises 182 residues: Negative transcriptional regulator PadR (182 aa).

The protein belongs to the PadR family. As to quaternary structure, homodimer.

It is found in the cytoplasm. PadR repressor activity is inhibited in the presence of phenolic acids, which directly modulate PadR binding to the promoter of padC, leading to the dissociation of PadR from the operator DNA and expression of padC. In the presence of MgCl(2), binding is not altered by phenolic acids. Transcriptional regulator involved in the regulation of the metabolism of phenolic acids. In the absence of phenolic acids, represses the expression of padC, which encodes a phenolic acid decarboxylase (PAD) involved in the detoxification of harmful phenolic acids. Acts by binding to the padC promoter region, preventing the transcription of the gene. The chain is Negative transcriptional regulator PadR from Bacillus subtilis (strain 168).